The chain runs to 865 residues: Chitin synthase 3 (865 aa).

Residues 1 to 59 are disordered; it reads MASQYPGHQLDDIPSTNVYRPPPRHEDDEAEHALLHQNSAYQSQYDDPHSRPLTPGQES. Over residues 23–34 the composition is skewed to basic and acidic residues; it reads PRHEDDEAEHAL. A compositionally biased stretch (polar residues) spans 36–45; it reads HQNSAYQSQY. 3 N-linked (GlcNAc...) asparagine glycosylation sites follow: Asn64, Asn95, and Asn538. Helical transmembrane passes span 565–585, 620–640, and 650–670; these read FFLH…WFSL, IINT…FILA, and VAYI…IVLS. An N-linked (GlcNAc...) asparagine glycan is attached at Asn682. 3 consecutive transmembrane segments (helical) span residues 707-727, 735-755, and 837-857; these read IVII…FLYM, SFAQ…IYAF, and LVAT…SDSL.

The protein belongs to the chitin synthase family. Class III subfamily.

The protein resides in the cell membrane. It catalyses the reaction [(1-&gt;4)-N-acetyl-beta-D-glucosaminyl](n) + UDP-N-acetyl-alpha-D-glucosamine = [(1-&gt;4)-N-acetyl-beta-D-glucosaminyl](n+1) + UDP + H(+). Polymerizes chitin, a structural polymer of the cell wall and septum, by transferring the sugar moiety of UDP-GlcNAc to the non-reducing end of the growing chitin polymer. Is not only stable at different pH, but is also able to tolerate a broad temperature range. With CHS2, plays an important role in virulence. The protein is Chitin synthase 3 of Exophiala dermatitidis (strain ATCC 34100 / CBS 525.76 / NIH/UT8656) (Black yeast).